We begin with the raw amino-acid sequence, 367 residues long: Phosphoribosylaminoimidazole-succinocarboxamide synthase (367 aa).

This sequence belongs to the SAICAR synthetase family.

It carries out the reaction 5-amino-1-(5-phospho-D-ribosyl)imidazole-4-carboxylate + L-aspartate + ATP = (2S)-2-[5-amino-1-(5-phospho-beta-D-ribosyl)imidazole-4-carboxamido]succinate + ADP + phosphate + 2 H(+). It functions in the pathway purine metabolism; IMP biosynthesis via de novo pathway; 5-amino-1-(5-phospho-D-ribosyl)imidazole-4-carboxamide from 5-amino-1-(5-phospho-D-ribosyl)imidazole-4-carboxylate: step 1/2. This Vibrio campbellii (strain ATCC BAA-1116) protein is Phosphoribosylaminoimidazole-succinocarboxamide synthase.